A 242-amino-acid polypeptide reads, in one-letter code: Orotidine 5'-phosphate decarboxylase (242 aa).

Residues Asp-16, Lys-37, 64 to 73, Thr-128, Arg-190, Gln-199, Gly-219, and Arg-220 each bind substrate; that span reads DLKFHDIPNT. Lys-66 (proton donor) is an active-site residue.

Belongs to the OMP decarboxylase family. Type 1 subfamily. Homodimer.

The catalysed reaction is orotidine 5'-phosphate + H(+) = UMP + CO2. It functions in the pathway pyrimidine metabolism; UMP biosynthesis via de novo pathway; UMP from orotate: step 2/2. Catalyzes the decarboxylation of orotidine 5'-monophosphate (OMP) to uridine 5'-monophosphate (UMP). The polypeptide is Orotidine 5'-phosphate decarboxylase (Prochlorococcus marinus (strain AS9601)).